Consider the following 232-residue polypeptide: Phosphoglycolate phosphatase (232 aa).

Asp-8 (nucleophile) is an active-site residue. Residues Asp-8 and Asp-10 each contribute to the Mg(2+) site. Lys-156 serves as a coordination point for substrate. Positions 179 and 183 each coordinate Mg(2+).

It belongs to the archaeal SPP-like hydrolase family. The cofactor is Mg(2+).

The enzyme catalyses 2-phosphoglycolate + H2O = glycolate + phosphate. Functionally, catalyzes the dephosphorylation of 2-phosphoglycolate. This Methanopyrus kandleri (strain AV19 / DSM 6324 / JCM 9639 / NBRC 100938) protein is Phosphoglycolate phosphatase.